The chain runs to 292 residues: ATP synthase gamma chain (292 aa).

The protein belongs to the ATPase gamma chain family. In terms of assembly, F-type ATPases have 2 components, CF(1) - the catalytic core - and CF(0) - the membrane proton channel. CF(1) has five subunits: alpha(3), beta(3), gamma(1), delta(1), epsilon(1). CF(0) has three main subunits: a, b and c.

Its subcellular location is the cell inner membrane. Functionally, produces ATP from ADP in the presence of a proton gradient across the membrane. The gamma chain is believed to be important in regulating ATPase activity and the flow of protons through the CF(0) complex. The sequence is that of ATP synthase gamma chain from Nitrobacter hamburgensis (strain DSM 10229 / NCIMB 13809 / X14).